The following is a 1885-amino-acid chain: Chitin synthase 5 (1885 aa).

One can recognise a Myosin motor domain in the interval 1 to 789 (MATRGNVPAH…SIALTGSQAA (789 aa)). Residue 99–106 (GESGSGKT) coordinates ATP. Asparagine 219 and asparagine 429 each carry an N-linked (GlcNAc...) asparagine glycan. The disordered stretch occupies residues 601 to 649 (KPLRMPSVSRKKHDQLRRMASRRADRSPAPQEEEPLPGTEEAKVRRTKP). Basic residues predominate over residues 609 to 621 (SRKKHDQLRRMAS). Residues 666 to 690 (LDNITKSLTAPNVNNYFVFCLKPND) form an actin-binding region. N-linked (GlcNAc...) asparagine glycosylation is present at asparagine 668. A disordered region spans residues 794–817 (GDIGSPSRPDTPGHNPFSDSKARL). 2 helical membrane-spanning segments follow: residues 894–914 (WLAIVYFLTWYLPDFAIKWIG) and 929–949 (FAINLLIWLSCGLVVFFIIVF). The Cytochrome b5 heme-binding domain maps to 957-1016 (QNVYSAAELSAHDGKGKHSAYVAIRGQVFDLGAFMPNHYPKIIPQSSLKKYAGVDATGLF). 2 N-linked (GlcNAc...) asparagine glycosylation sites follow: asparagine 1043 and asparagine 1068. A helical membrane pass occupies residues 1205-1225 (ILLAVSILLCSVIGFKFFAAL). N-linked (GlcNAc...) asparagine glycans are attached at residues asparagine 1462 and asparagine 1568. 3 consecutive transmembrane segments (helical) span residues 1599–1619 (LLSTVVAPVTVAYIAYLIVLL), 1626–1646 (VPLTAFILLGAIYGLQAIIFI), and 1653–1673 (MIGWMIVYILAMPVFSLGLPL). N-linked (GlcNAc...) asparagine glycosylation is found at asparagine 1759 and asparagine 1790. The DEK-C domain maps to 1827-1882 (LPTDDMLLNEIRDILRTADLMTVTKKGIKQELERRFNVNLDMKRAYIGSATEAILS).

It in the N-terminal section; belongs to the TRAFAC class myosin-kinesin ATPase superfamily. Myosin family. The protein in the C-terminal section; belongs to the chitin synthase family. Class V subfamily. In terms of processing, maximal activity requires trypsin activation, suggesting a zymogenic nature.

The protein resides in the cell membrane. It localises to the membrane. The catalysed reaction is [(1-&gt;4)-N-acetyl-beta-D-glucosaminyl](n) + UDP-N-acetyl-alpha-D-glucosamine = [(1-&gt;4)-N-acetyl-beta-D-glucosaminyl](n+1) + UDP + H(+). Its function is as follows. Polymerizes chitin, a structural polymer of the cell wall and septum, by transferring the sugar moiety of UDP-GlcNAc to the non-reducing end of the growing chitin polymer. CHS5 is required for the sustained growth at 37 degrees Celsius and is of critical importance for virulence. Especially important at infection temperatures for maintaining the cell wall integrity of developing yeast buds, elongating tips of hyphae, and random sites of expansion in sclerotic forms. The polypeptide is Chitin synthase 5 (Exophiala dermatitidis (strain ATCC 34100 / CBS 525.76 / NIH/UT8656) (Black yeast)).